The primary structure comprises 694 residues: Elongation factor G (694 aa).

One can recognise a tr-type G domain in the interval 8–287 (EDYRNFGIMA…AVVEFLPAPT (280 aa)). GTP is bound by residues 17-24 (AHIDAGKT), 86-90 (DTPGH), and 140-143 (NKMD).

This sequence belongs to the TRAFAC class translation factor GTPase superfamily. Classic translation factor GTPase family. EF-G/EF-2 subfamily.

The protein resides in the cytoplasm. Its function is as follows. Catalyzes the GTP-dependent ribosomal translocation step during translation elongation. During this step, the ribosome changes from the pre-translocational (PRE) to the post-translocational (POST) state as the newly formed A-site-bound peptidyl-tRNA and P-site-bound deacylated tRNA move to the P and E sites, respectively. Catalyzes the coordinated movement of the two tRNA molecules, the mRNA and conformational changes in the ribosome. In Brucella abortus (strain S19), this protein is Elongation factor G.